The primary structure comprises 466 residues: MQVVSVKKALAGGVEEGTKVEVRGWVRTRRDSKAGISFVNVSDGSTFDPIQVVAPNSLPNYEKEILHLTAGCSVISRGTLVKSQGKGQAYEVQADEVQVLGFVDDPDTYPIQPKQHTLEFLRDVAHLRVRTNTFSAVTRVRHRAAQAVHRFFDEEGFFWVNTPIITASDAEGAGQMFRVSTLDAVNPPRTSDGKIDWHKDFFGKEAYLTVSGQLNAEAYALAMSKVYTFGPTFRAENSNTTRHLAEFWMIEPEVAFADLNEDANLAERFLKHVFKAVLNDCAPDLKFFEERVQKGVIERMEKFINSSFERIDYTEAVEILKKAKKKFEFEPEWGKDLQTEHERYLTEEHVGRPVVVMNYPEAIKSFYMRLNDDGKTVAAMDVLAPGIGEIIGGSQREERLDVLDQRIQKFGLKPESYQWYRDLRRYGSVPHAGFGLGFERLIVYMCGLQNIRDAIPYPRVPGSAAF.

Belongs to the class-II aminoacyl-tRNA synthetase family. In terms of assembly, homodimer.

It localises to the cytoplasm. It catalyses the reaction tRNA(Asn) + L-asparagine + ATP = L-asparaginyl-tRNA(Asn) + AMP + diphosphate + H(+). This is Asparagine--tRNA ligase from Myxococcus xanthus (strain DK1622).